We begin with the raw amino-acid sequence, 305 residues long: Coenzyme PQQ synthesis protein B (305 aa).

It belongs to the PqqB family.

The protein operates within cofactor biosynthesis; pyrroloquinoline quinone biosynthesis. In terms of biological role, may be involved in the transport of PQQ or its precursor to the periplasm. The polypeptide is Coenzyme PQQ synthesis protein B (Methylobacillus flagellatus (strain ATCC 51484 / DSM 6875 / VKM B-1610 / KT)).